The chain runs to 655 residues: THO complex subunit 1 (655 aa).

Disordered stretches follow at residues 403-427 and 539-574; these read ERPA…LGKG and PSEE…AVTN. Positions 415-431 match the Nuclear localization signal motif; it reads RKRQAPEDFLGKGPDRK. The span at 418 to 427 shows a compositional bias: basic and acidic residues; the sequence is QAPEDFLGKG. A compositionally biased stretch (polar residues) spans 563 to 574; sequence DSPSIQSKAVTN. The Death domain maps to 573–655; that stretch reads TNSQMDEIAA…NNIADNLSET (83 aa).

In terms of assembly, component of the THO complex. Expressed in the developing neuromast.

Its subcellular location is the nucleus. It is found in the nucleoplasm. The protein resides in the nucleus matrix. It localises to the cytoplasm. The protein localises to the cytosol. Its function is as follows. Component of the THO subcomplex of the TREX complex which is thought to couple mRNA transcription, processing and nuclear export, and which specifically associates with spliced mRNA and not with unspliced pre-mRNA. Required for efficient export of polyadenylated RNA. The THOC1-THOC2-THOC3 core complex alone is sufficient to bind export factor NXF1-NXT1 and promote ATPase activity of DDX39B. TREX is recruited to spliced mRNAs by a transcription-independent mechanism, binds to mRNA upstream of the exon-junction complex (EJC) and is recruited in a splicing- and cap-dependent manner to a region near the 5' end of the mRNA where it functions in mRNA export to the cytoplasm via the TAP/NXF1 pathway. Regulates transcriptional elongation of a subset of genes. Involved in genome stability by preventing co-transcriptional R-loop formation. May play a role in hair cell formation, hence may be involved in hearing. Participates in an apoptotic pathway which is characterized by activation of caspase-6, increases in the expression of BAK1 and BCL2L1 and activation of NF-kappa-B. This pathway does not require p53/TP53, nor does the presence of p53/TP53 affect the efficiency of cell killing. Activates a G2/M cell cycle checkpoint prior to the onset of apoptosis. Apoptosis is inhibited by association with RB1. Essential for early embryonic development. Required for normal gene expression during postnatal testis development. This Danio rerio (Zebrafish) protein is THO complex subunit 1 (thoc1).